The chain runs to 479 residues: Ribulose bisphosphate carboxylase large chain (479 aa).

Residues 1–2 (MS) constitute a propeptide that is removed on maturation. Proline 3 carries the N-acetylproline modification. Substrate-binding positions include threonine 65, asparagine 123, 173–177 (TIKPK), and 201–204 (KDDE). Catalysis depends on lysine 175, which acts as the Proton acceptor. 3 residues coordinate Mg(2+): lysine 201, aspartate 203, and glutamate 204. An N6-carboxylysine modification is found at lysine 201. Serine 208 is subject to Phosphoserine. The active-site Proton acceptor is histidine 294. Substrate is bound by residues 294 to 295 (HR) and histidine 327. Threonine 330 is modified (phosphothreonine). Residues lysine 334 and 379 to 381 (SGG) contribute to the substrate site.

The protein belongs to the RuBisCO large chain family. Type I subfamily. Heterohexadecamer of 8 large chains and 8 small chains; disulfide-linked. The disulfide link is formed within the large subunit homodimers. Interacts with RBCX1 and RBCX1. An intermediate complex made of eight RbcL subunits interacts with the chaperone BSD2. Requires Mg(2+) as cofactor. Post-translationally, the disulfide bond which can form in the large chain dimeric partners within the hexadecamer appears to be associated with oxidative stress and protein turnover.

Its subcellular location is the plastid. It is found in the chloroplast. The enzyme catalyses 2 (2R)-3-phosphoglycerate + 2 H(+) = D-ribulose 1,5-bisphosphate + CO2 + H2O. It carries out the reaction D-ribulose 1,5-bisphosphate + O2 = 2-phosphoglycolate + (2R)-3-phosphoglycerate + 2 H(+). In terms of biological role, ruBisCO catalyzes two reactions: the carboxylation of D-ribulose 1,5-bisphosphate, the primary event in carbon dioxide fixation, as well as the oxidative fragmentation of the pentose substrate in the photorespiration process. Both reactions occur simultaneously and in competition at the same active site. Binds to abscisic acid (ABA). In Arabidopsis thaliana (Mouse-ear cress), this protein is Ribulose bisphosphate carboxylase large chain.